The chain runs to 214 residues: Inner membrane-spanning protein YciB (214 aa).

The next 5 membrane-spanning stretches (helical) occupy residues 11-31 (ILFFIAFKLYGIYVATAVAII), 50-70 (MHIITLALIVILGGATLILQD), 81-101 (VNWGFALVFLGSHFIGQKPII), 119-139 (LSYMWIAFFIFSGIANIYVAY), and 149-169 (FKLFGLMGLTLAFILIQGVYI).

This sequence belongs to the YciB family.

The protein resides in the cell inner membrane. Its function is as follows. Plays a role in cell envelope biogenesis, maintenance of cell envelope integrity and membrane homeostasis. This is Inner membrane-spanning protein YciB from Hydrogenovibrio crunogenus (strain DSM 25203 / XCL-2) (Thiomicrospira crunogena).